We begin with the raw amino-acid sequence, 65 residues long: Small ribosomal subunit protein bS21A (65 aa).

The protein belongs to the bacterial ribosomal protein bS21 family.

The chain is Small ribosomal subunit protein bS21A from Francisella tularensis subsp. tularensis (strain FSC 198).